A 162-amino-acid polypeptide reads, in one-letter code: MGLETEKADVQLFMDDDSYSHHSGLEYADPEKFADSGQDRDPHRLNSHLKLGFEDVVAEPVTTHSFDKVWICSHALFEISKYVMYKFLTVFLAIPLAFLAGILFATLSCLHIWIIMPFVKTCLMVLPSVQTIWKSVTDAIIAPLCTSIGRSFSSVSLQLSQD.

At Met-1–Lys-86 the chain is on the cytoplasmic side. The residue at position 19 (Tyr-19) is a Phosphotyrosine; by SRC. 2 positions are modified to phosphoserine: Ser-20 and Ser-23. A Phosphotyrosine; by SRC modification is found at Tyr-27. The residue at position 36 (Ser-36) is a Phosphoserine. The helical intramembrane region spans Phe-87–Leu-107. Residues Ser-108–Asp-162 lie on the Cytoplasmic side of the membrane.

It belongs to the caveolin family. In terms of assembly, monomer or homodimer. Interacts with CAV1; the interaction forms a stable heterooligomeric complex that is required for targeting to lipid rafts and for caveolae formation. Tyrosine phosphorylated forms do not form heterooligomers with the Tyr-19-phosphorylated form existing as a monomer or dimer, and the Tyr-27-form as a monomer only. Interacts (tyrosine phosphorylated form) with the SH2 domain-containing proteins, RASA1, NCK1 and SRC. Interacts (tyrosine phosphorylated form) with INSR, the interaction (Tyr-27-phosphorylated form) is increased on insulin stimulation. Interacts (Tyr-19 phosphorylated form) with MAPK1 (phosphorylated form); the interaction, promoted by insulin, leads to nuclear location and MAPK1 activation. Interacts with STAT3; the interaction is increased on insulin-induced tyrosine phosphorylation leading to STAT activation. Post-translationally, phosphorylated on serine and tyrosine residues. CAV1 promotes phosphorylation on Ser-23 which then targets the complex to the plasma membrane, lipid rafts and caveolae. Phosphorylation on Ser-36 appears to modulate mitosis in endothelial cells. Phosphorylation on both Tyr-19 and Tyr-27 is required for insulin-induced 'Ser-727' phosphorylation of STAT3 and its activation. Phosphorylation on Tyr-19 is required for insulin-induced phosphorylation of MAPK1 and DNA binding of STAT3. Tyrosine phosphorylation is induced by both EGF and insulin (By. similarity).

The protein resides in the nucleus. Its subcellular location is the cytoplasm. It is found in the golgi apparatus membrane. It localises to the cell membrane. The protein localises to the membrane. The protein resides in the caveola. In terms of biological role, may act as a scaffolding protein within caveolar membranes. Interacts directly with G-protein alpha subunits and can functionally regulate their activity. Acts as an accessory protein in conjunction with CAV1 in targeting to lipid rafts and driving caveolae formation. The Ser-36 phosphorylated form has a role in modulating mitosis in endothelial cells. Positive regulator of cellular mitogenesis of the MAPK signaling pathway. Required for the insulin-stimulated nuclear translocation and activation of MAPK1 and STAT3, and the subsequent regulation of cell cycle progression. This chain is Caveolin-2 (CAV2), found in Plecturocebus moloch (Dusky titi monkey).